The following is a 407-amino-acid chain: Queuine tRNA-ribosyltransferase-like protein (407 aa).

This sequence belongs to the queuine tRNA-ribosyltransferase family.

The protein is Queuine tRNA-ribosyltransferase-like protein of Plasmodium falciparum (isolate 3D7).